Reading from the N-terminus, the 76-residue chain is Exodeoxyribonuclease 7 small subunit (76 aa).

The protein belongs to the XseB family. Heterooligomer composed of large and small subunits.

Its subcellular location is the cytoplasm. The enzyme catalyses Exonucleolytic cleavage in either 5'- to 3'- or 3'- to 5'-direction to yield nucleoside 5'-phosphates.. In terms of biological role, bidirectionally degrades single-stranded DNA into large acid-insoluble oligonucleotides, which are then degraded further into small acid-soluble oligonucleotides. The sequence is that of Exodeoxyribonuclease 7 small subunit from Geotalea uraniireducens (strain Rf4) (Geobacter uraniireducens).